Here is a 157-residue protein sequence, read N- to C-terminus: MGRFIFVSFGLLVVFLSLSGTGADFDCPSGWSAYDQYCYKPFNEPQNWDDAERFCSEQAKGGHLVSIESDGEADFVAQLAQKIDKPDIYIWIGLRVQGKEQQCSSEWSDGSSIIYVNWNKGESQMCQGLTRWTNFLKWDYTDCQAKKPFVCKFPPEC.

An N-terminal signal peptide occupies residues 1-23 (MGRFIFVSFGLLVVFLSLSGTGA). 3 disulfide bridges follow: Cys-27–Cys-38, Cys-55–Cys-151, and Cys-126–Cys-143. The region spanning 34–152 (YDQYCYKPFN…CQAKKPFVCK (119 aa)) is the C-type lectin domain.

Belongs to the snaclec family. Heteromultimer; disulfide-linked. In terms of tissue distribution, expressed by the venom gland.

It is found in the secreted. Its function is as follows. Interferes with one step of hemostasis (modulation of platelet aggregation, or coagulation cascade, for example). The chain is C-type lectin 9a from Crotalus adamanteus (Eastern diamondback rattlesnake).